Consider the following 339-residue polypeptide: Glycerol-3-phosphate dehydrogenase [NAD(P)+] (339 aa).

NADPH contacts are provided by Ser-15, Tyr-16, His-36, and Lys-110. Lys-110, Gly-139, and Thr-141 together coordinate sn-glycerol 3-phosphate. Ala-143 contributes to the NADPH binding site. Sn-glycerol 3-phosphate-binding residues include Lys-195, Asp-248, Ser-258, Arg-259, and Asn-260. The Proton acceptor role is filled by Lys-195. Arg-259 is a binding site for NADPH. Residues Val-283 and Glu-285 each contribute to the NADPH site.

This sequence belongs to the NAD-dependent glycerol-3-phosphate dehydrogenase family.

The protein resides in the cytoplasm. It catalyses the reaction sn-glycerol 3-phosphate + NAD(+) = dihydroxyacetone phosphate + NADH + H(+). It carries out the reaction sn-glycerol 3-phosphate + NADP(+) = dihydroxyacetone phosphate + NADPH + H(+). The protein operates within membrane lipid metabolism; glycerophospholipid metabolism. In terms of biological role, catalyzes the reduction of the glycolytic intermediate dihydroxyacetone phosphate (DHAP) to sn-glycerol 3-phosphate (G3P), the key precursor for phospholipid synthesis. The polypeptide is Glycerol-3-phosphate dehydrogenase [NAD(P)+] (Escherichia fergusonii (strain ATCC 35469 / DSM 13698 / CCUG 18766 / IAM 14443 / JCM 21226 / LMG 7866 / NBRC 102419 / NCTC 12128 / CDC 0568-73)).